Consider the following 198-residue polypeptide: MFFWLMCYLVDVWLISASDVGHCPDPLLVTDEFSSLEPVNVNDTFMFKCNEHCIFKGSNWSQCRENHTRVTHSPVSKSRDCGPPETPTHGYFEGRDFKSGSTITYYCEARYRLVGTQHQQCIDGEWTSAPPICELIQEAPKPAELELEKAFLAFQESKELCKAIKKFTQRLKKSDLTMEKVKYSLERKKAKLKAKMLL.

An N-terminal signal peptide occupies residues 1–17 (MFFWLMCYLVDVWLISA). The Sushi 1; atypical; lacks a Cys domain maps to 22 to 77 (HCPDPLLVTDEFSSLEPVNVNDTFMFKCNEHCIFKGSNWSQCRENHTRVTHSPVSK). N-linked (GlcNAc...) asparagine glycans are attached at residues Asn42, Asn59, and Asn66. The 57-residue stretch at 79–135 (RDCGPPETPTHGYFEGRDFKSGSTITYYCEARYRLVGTQHQQCIDGEWTSAPPICEL) folds into the Sushi 2 domain. 2 cysteine pairs are disulfide-bonded: Cys81/Cys121 and Cys107/Cys133.

In terms of assembly, disulfide-linked complex of alpha and beta chains.

Its subcellular location is the secreted. In terms of biological role, controls the classical pathway of complement activation. It binds as a cofactor to C3b/C4b inactivator (C3bINA), which then hydrolyzes the complement fragment C4b. It also accelerates the degradation of the C4bC2a complex (C3 convertase) by dissociating the complement fragment C2a. It also interacts with serum amyloid P component. The polypeptide is C4b-binding protein beta chain (C4BPB) (Bos taurus (Bovine)).